Here is a 211-residue protein sequence, read N- to C-terminus: ATP-dependent Clp protease proteolytic subunit (211 aa).

Catalysis depends on Ser-106, which acts as the Nucleophile. The active site involves His-131.

Belongs to the peptidase S14 family. Fourteen ClpP subunits assemble into 2 heptameric rings which stack back to back to give a disk-like structure with a central cavity, resembling the structure of eukaryotic proteasomes.

The protein localises to the cytoplasm. It catalyses the reaction Hydrolysis of proteins to small peptides in the presence of ATP and magnesium. alpha-casein is the usual test substrate. In the absence of ATP, only oligopeptides shorter than five residues are hydrolyzed (such as succinyl-Leu-Tyr-|-NHMec, and Leu-Tyr-Leu-|-Tyr-Trp, in which cleavage of the -Tyr-|-Leu- and -Tyr-|-Trp bonds also occurs).. In terms of biological role, cleaves peptides in various proteins in a process that requires ATP hydrolysis. Has a chymotrypsin-like activity. Plays a major role in the degradation of misfolded proteins. This Rhodopseudomonas palustris (strain BisA53) protein is ATP-dependent Clp protease proteolytic subunit.